We begin with the raw amino-acid sequence, 158 residues long: Glycogen accumulation regulator GarA (158 aa).

Residue T20 is modified to Phosphothreonine; by PknG. The residue at position 21 (T21) is a Phosphothreonine; by PknB. The 50-residue stretch at 76 to 125 (TSAGRHPDSDIFLDDVTVSRRHAEFRLEGGEFQVVDVGSLNGTYVNREPV) folds into the FHA domain.

As to quaternary structure, monomer. Binds via its FHA domain to Kgd, Gdh, and the N-terminal region of PknG. Phosphorylated on Thr-21 by PknB. Phosphorylated on Thr-20 by PknG. Phosphorylation at either Thr-20 or Thr-21 prevents binding to target enzymes.

Functionally, involved in regulation of glutamate metabolism. Acts as a phosphorylation-dependent molecular switch that modulates the activities of Kgd and Gdh. The chain is Glycogen accumulation regulator GarA (garA) from Mycolicibacterium smegmatis (strain ATCC 700084 / mc(2)155) (Mycobacterium smegmatis).